The primary structure comprises 314 residues: 2,3-dihydroxyphenylpropionate/2,3-dihydroxicinnamic acid 1,2-dioxygenase (314 aa).

His115 functions as the Proton donor in the catalytic mechanism. His179 acts as the Proton acceptor in catalysis.

Belongs to the LigB/MhpB extradiol dioxygenase family. As to quaternary structure, homotetramer. Fe(2+) is required as a cofactor.

The catalysed reaction is 3-(2,3-dihydroxyphenyl)propanoate + O2 = (2Z,4E)-2-hydroxy-6-oxonona-2,4-dienedioate + H(+). It carries out the reaction (2E)-3-(2,3-dihydroxyphenyl)prop-2-enoate + O2 = (2Z,4E,7E)-2-hydroxy-6-oxonona-2,4,7-trienedioate + H(+). The protein operates within aromatic compound metabolism; 3-phenylpropanoate degradation. Its function is as follows. Catalyzes the non-heme iron(II)-dependent oxidative cleavage of 2,3-dihydroxyphenylpropionic acid and 2,3-dihydroxicinnamic acid into 2-hydroxy-6-ketononadienedioate and 2-hydroxy-6-ketononatrienedioate, respectively. This Rhodococcus globerulus protein is 2,3-dihydroxyphenylpropionate/2,3-dihydroxicinnamic acid 1,2-dioxygenase.